Here is a 690-residue protein sequence, read N- to C-terminus: Glycine--tRNA ligase beta subunit (690 aa).

It belongs to the class-II aminoacyl-tRNA synthetase family. Tetramer of two alpha and two beta subunits.

The protein localises to the cytoplasm. The enzyme catalyses tRNA(Gly) + glycine + ATP = glycyl-tRNA(Gly) + AMP + diphosphate. This Lactobacillus gasseri (strain ATCC 33323 / DSM 20243 / BCRC 14619 / CIP 102991 / JCM 1131 / KCTC 3163 / NCIMB 11718 / NCTC 13722 / AM63) protein is Glycine--tRNA ligase beta subunit.